A 241-amino-acid polypeptide reads, in one-letter code: Triosephosphate isomerase (241 aa).

Position 9 to 11 (9 to 11 (NWK)) interacts with substrate. H96 (electrophile) is an active-site residue. Catalysis depends on E165, which acts as the Proton acceptor. Substrate contacts are provided by residues G171, S204, and 225–226 (GG).

The protein belongs to the triosephosphate isomerase family. In terms of assembly, homodimer.

The protein localises to the cytoplasm. It carries out the reaction D-glyceraldehyde 3-phosphate = dihydroxyacetone phosphate. It participates in carbohydrate biosynthesis; gluconeogenesis. It functions in the pathway carbohydrate degradation; glycolysis; D-glyceraldehyde 3-phosphate from glycerone phosphate: step 1/1. Its function is as follows. Involved in the gluconeogenesis. Catalyzes stereospecifically the conversion of dihydroxyacetone phosphate (DHAP) to D-glyceraldehyde-3-phosphate (G3P). The protein is Triosephosphate isomerase of Prochlorococcus marinus (strain MIT 9301).